Consider the following 443-residue polypeptide: Probable D-serine dehydratase (443 aa).

N6-(pyridoxal phosphate)lysine is present on K118.

This sequence belongs to the serine/threonine dehydratase family. DsdA subfamily. The cofactor is pyridoxal 5'-phosphate.

The catalysed reaction is D-serine = pyruvate + NH4(+). The polypeptide is Probable D-serine dehydratase (Vibrio campbellii (strain ATCC BAA-1116)).